The sequence spans 208 residues: Small ribosomal subunit protein uS4 (208 aa).

Positions 98–161 (QRLDNVVFRM…KSNPQVVRAL (64 aa)) constitute an S4 RNA-binding domain.

It belongs to the universal ribosomal protein uS4 family. Part of the 30S ribosomal subunit. Contacts protein S5. The interaction surface between S4 and S5 is involved in control of translational fidelity.

One of the primary rRNA binding proteins, it binds directly to 16S rRNA where it nucleates assembly of the body of the 30S subunit. Functionally, with S5 and S12 plays an important role in translational accuracy. This chain is Small ribosomal subunit protein uS4, found in Aliarcobacter butzleri (strain RM4018) (Arcobacter butzleri).